We begin with the raw amino-acid sequence, 333 residues long: Adenosine deaminase (333 aa).

Zn(2+)-binding residues include His12 and His14. 3 residues coordinate substrate: His14, Asp16, and Gly170. His197 lines the Zn(2+) pocket. The active-site Proton donor is the Glu200. Asp278 serves as a coordination point for Zn(2+). Asp279 contributes to the substrate binding site.

Belongs to the metallo-dependent hydrolases superfamily. Adenosine and AMP deaminases family. Adenosine deaminase subfamily. The cofactor is Zn(2+).

The catalysed reaction is adenosine + H2O + H(+) = inosine + NH4(+). It carries out the reaction 2'-deoxyadenosine + H2O + H(+) = 2'-deoxyinosine + NH4(+). In terms of biological role, catalyzes the hydrolytic deamination of adenosine and 2-deoxyadenosine. This Salmonella dublin (strain CT_02021853) protein is Adenosine deaminase.